Consider the following 60-residue polypeptide: UPF0434 protein Spro_1718 (60 aa).

The protein belongs to the UPF0434 family.

The polypeptide is UPF0434 protein Spro_1718 (Serratia proteamaculans (strain 568)).